The chain runs to 528 residues: Inositol-3-phosphate synthase (528 aa).

Gly-66, Gly-67, Asn-68, Asn-69, Asp-140, Gln-187, Arg-190, Thr-228, Ala-229, Asn-230, Thr-231, Gly-279, Asp-304, Ser-307, Asn-338, Asn-339, Asp-340, Lys-353, Gly-392, Asp-393, Asp-421, and Ser-422 together coordinate NAD(+).

Belongs to the myo-inositol 1-phosphate synthase family. Requires NAD(+) as cofactor.

It is found in the cytoplasm. Its subcellular location is the cytosol. The enzyme catalyses D-glucose 6-phosphate = 1D-myo-inositol 3-phosphate. It functions in the pathway polyol metabolism; myo-inositol biosynthesis; myo-inositol from D-glucose 6-phosphate: step 1/2. With respect to regulation, activated by ammonium ions. In terms of biological role, key enzyme in myo-inositol biosynthesis pathway that catalyzes the conversion of glucose 6-phosphate to 1-myo-inositol 1-phosphate in a NAD-dependent manner. Rate-limiting enzyme in the synthesis of all inositol-containing compounds. De novo-synthesized myo-inositol is essential for incorporation into GPI (glycosylphosphatidylinositol) glycolipids in the bloodstream form. The sequence is that of Inositol-3-phosphate synthase from Trypanosoma brucei brucei.